The primary structure comprises 155 residues: Transcription antitermination protein NusB (155 aa).

The protein belongs to the NusB family.

In terms of biological role, involved in transcription antitermination. Required for transcription of ribosomal RNA (rRNA) genes. Binds specifically to the boxA antiterminator sequence of the ribosomal RNA (rrn) operons. The sequence is that of Transcription antitermination protein NusB from Halorhodospira halophila (strain DSM 244 / SL1) (Ectothiorhodospira halophila (strain DSM 244 / SL1)).